Reading from the N-terminus, the 554-residue chain is 3-(3-hydroxy-phenyl)propionate/3-hydroxycinnamic acid hydroxylase (554 aa).

FAD contacts are provided by residues 17–46 (QVAI…VVEK) and 285–295 (FRIDRVLLAGD).

It belongs to the PheA/TfdB FAD monooxygenase family. It depends on FAD as a cofactor.

The catalysed reaction is 3-(3-hydroxyphenyl)propanoate + NADH + O2 + H(+) = 3-(2,3-dihydroxyphenyl)propanoate + NAD(+) + H2O. It catalyses the reaction (2E)-3-(3-hydroxyphenyl)prop-2-enoate + NADH + O2 + H(+) = (2E)-3-(2,3-dihydroxyphenyl)prop-2-enoate + NAD(+) + H2O. Its pathway is aromatic compound metabolism; 3-phenylpropanoate degradation. Functionally, catalyzes the insertion of one atom of molecular oxygen into position 2 of the phenyl ring of 3-(3-hydroxyphenyl)propionate (3-HPP) and hydroxycinnamic acid (3HCI). The polypeptide is 3-(3-hydroxy-phenyl)propionate/3-hydroxycinnamic acid hydroxylase (Escherichia coli (strain 55989 / EAEC)).